The chain runs to 780 residues: Cullin-5 (780 aa).

Position 34 is a phosphoserine (Ser-34). A Phosphothreonine modification is found at Thr-210. One can recognise a Cullin neddylation domain in the interval 711–772 (RILRTQEAII…HKYIRRDESD (62 aa)). Lys-724 participates in a covalent cross-link: Glycyl lysine isopeptide (Lys-Gly) (interchain with G-Cter in NEDD8).

Belongs to the cullin family. As to quaternary structure, component of multiple cullin-5-RING E3 ubiquitin-protein ligase complexes (ECS complexes, also named CRL5 complexes) formed of CUL5, Elongin BC (ELOB and ELOC), RNF7/RBX2 and a variable SOCS box domain-containing protein as substrate-specific recognition component. CUL5-containing ECS complexes specifically contain RNF7/RBX2, and not RBX1, as catalytic subunit. Component of the ECS(ASB2) complex with the substrate recognition component ASB2. Component of the ECS(ASB6) complex with the substrate recognition component ASB6. Component of the ECS(ASB7) complex with the substrate recognition component ASB7. Component of the ECS(ASB9) complex with the substrate recognition component ASB9. Component of the ECS(ASB11) complex with the substrate recognition component ASB11. Component of the ECS(ASB12) complex with the substrate recognition component ASB12. Component of the ECS(LRRC41) complex with the substrate recognition component LRRC41. Component of the ECS(SOCS1) complex with the substrate recognition component SOCS1. Component of the ECS(SOCS2) complex with the substrate recognition component SOCS2. Component of the ECS(WSB1) complex with the substrate recognition subunit WSB1. Component of the ECS(SOCS3) complex with the substrate recognition component SOCS3. Component of the ECS(SOCS7) complex with the substrate recognition component SOCS7. Component of the ECS(SPSB1) complex with the substrate recognition component SPSB1. Component of the ECS(SPSB3) complex with the substrate recognition component SPSB3. Component of the ECS(SPSB2) complex with the substrate recognition component SPSB2. Component of the ECS(SPSB4) complex with the substrate recognition component SPSB4. Component of the ECS(RAB40) complex with the substrate recognition subunit RAB40A, RAB40B or RAB40C. Component of the ECS(KLHDC1) complex with the substrate recognition component KLHDC1. Component of the ECS(PCMTD1) complex with the substrate recognition subunit PCMTD1. May also form complexes containing RBX1 and ELOA or VHL; additional evidence is however required to confirm this result in vivo. Interacts (when neddylated) with ARIH2; leading to activate the E3 ligase activity of ARIH2. Interacts with ERCC6; the interaction is induced by DNA damaging agents or inhibitors of RNA polymerase II elongation. Interacts with ELOA (via the BC-box). Interacts (unneddylated form) with DCUN1D1, DCUN1D2, DCUN1D3, DCUN1D4 and DCUN1D5; these interactions promote the cullin neddylation. (Microbial infection) Interacts (via the substrate recognition component) with HIV-1 Vif; forming an active cullin-5-RING E3 ubiquitin-protein ligase complex (ECS complex). In terms of assembly, (Microbial infection) Interacts (via the substrate recognition component) with human adenovirus 5 proteins E1B-55K and E4-orf6. As to quaternary structure, (Microbial infection) Interacts with herpes virus 8 protein LANA1; this interaction promotes the degradation of NF-kappa-B component RELA. (Microbial infection) Interacts with molluscum contagiosum virus protein MC132; this interaction promotes the degradation of NF-kappa-B component RELA. In terms of processing, neddylated; which enhances the ubiquitination activity of ECS complexes and prevents binding of the inhibitor CAND1. Deneddylated via its interaction with the COP9 signalosome (CSN).

Its subcellular location is the nucleus. It participates in protein modification; protein ubiquitination. In terms of biological role, core component of multiple cullin-5-RING E3 ubiquitin-protein ligase complexes (ECS complexes, also named CRL5 complexes), which mediate the ubiquitination and subsequent proteasomal degradation of target proteins. Acts a scaffold protein that contributes to catalysis through positioning of the substrate and the ubiquitin-conjugating enzyme. The functional specificity of the E3 ubiquitin-protein ligase complex depends on the variable SOCS box-containing substrate recognition component. Acts as a key regulator of neuron positioning during cortex development: component of various SOCS-containing ECS complexes, such as the ECS(SOCS7) complex, that regulate reelin signaling by mediating ubiquitination and degradation of DAB1. ECS(SOCS1) seems to direct ubiquitination of JAK2. The ECS(SOCS2) complex mediates the ubiquitination and subsequent proteasomal degradation of phosphorylated EPOR and GHR. The ECS(SPSB3) complex catalyzes ubiquitination of nuclear CGAS. ECS(KLHDC1) complex is part of the DesCEND (destruction via C-end degrons) pathway and mediates ubiquitination and degradation of truncated SELENOS selenoprotein produced by failed UGA/Sec decoding, which ends with a glycine. The ECS(ASB9) complex mediates ubiquitination and degradation of CKB. As part of some ECS complex, promotes 'Lys-11'-linked ubiquitination and degradation of BTRC. As part of a multisubunit ECS complex, polyubiquitinates monoubiquitinated POLR2A. As part of the ECS(RAB40C) complex, mediates ANKRD28 ubiquitination and degradation, thereby inhibiting protein phosphatase 6 (PP6) complex activity and focal adhesion assembly during cell migration. As part of the ECS(RAB40A) complex, mediates RHOU 'Lys-48'-linked ubiquitination and degradation, thus inhibiting focal adhesion disassembly during cell migration. As part of the ECS(RAB40B) complex, mediates LIMA1/EPLIN and RAP2 ubiquitination, thereby regulating actin cytoskeleton dynamics and stress fiber formation during cell migration. May form a cell surface vasopressin receptor. (Microbial infection) Following infection by HIV-1 virus, CUL5 associates with HIV-1 Vif proteins and forms a cullin-5-RING E3 ubiquitin-protein ligase complex (ECS complex) that catalyzes ubiquitination and degradation of APOBEC3F and APOBEC3G. The complex can also ubiquitinate APOBEC3H to some extent. Functionally, (Microbial infection) Seems to be involved in proteasomal degradation of p53/TP53 stimulated by adenovirus E1B-55 kDa protein. The chain is Cullin-5 from Homo sapiens (Human).